A 412-amino-acid polypeptide reads, in one-letter code: Imidazolonepropionase (412 aa).

Fe(3+) contacts are provided by H71 and H73. Zn(2+) contacts are provided by H71 and H73. Residues R80, Y143, and H176 each coordinate 4-imidazolone-5-propanoate. Y143 is an N-formimidoyl-L-glutamate binding site. H241 serves as a coordination point for Fe(3+). H241 serves as a coordination point for Zn(2+). Residue Q244 participates in 4-imidazolone-5-propanoate binding. D316 provides a ligand contact to Fe(3+). D316 is a Zn(2+) binding site. Positions 318 and 320 each coordinate N-formimidoyl-L-glutamate. A 4-imidazolone-5-propanoate-binding site is contributed by T321.

It belongs to the metallo-dependent hydrolases superfamily. HutI family. It depends on Zn(2+) as a cofactor. The cofactor is Fe(3+).

Its subcellular location is the cytoplasm. The enzyme catalyses 4-imidazolone-5-propanoate + H2O = N-formimidoyl-L-glutamate. The protein operates within amino-acid degradation; L-histidine degradation into L-glutamate; N-formimidoyl-L-glutamate from L-histidine: step 3/3. Its function is as follows. Catalyzes the hydrolytic cleavage of the carbon-nitrogen bond in imidazolone-5-propanoate to yield N-formimidoyl-L-glutamate. It is the third step in the universal histidine degradation pathway. This chain is Imidazolonepropionase, found in Aromatoleum aromaticum (strain DSM 19018 / LMG 30748 / EbN1) (Azoarcus sp. (strain EbN1)).